Here is a 249-residue protein sequence, read N- to C-terminus: Probable endopeptidase YafL (249 aa).

The signal sequence occupies residues 1-17; sequence MSLPSIPSFVLSGLLLI. A lipid anchor (N-palmitoyl cysteine) is attached at cysteine 18. Residue cysteine 18 is the site of S-diacylglycerol cysteine attachment. Residues 116-243 form the NlpC/P60 domain; sequence HNITEVAIHR…DHFLGARRIL (128 aa). Cysteine 147 acts as the Nucleophile in catalysis. Histidine 202 serves as the catalytic Proton acceptor. Glutamate 214 is a catalytic residue.

The protein belongs to the peptidase C40 family.

The protein resides in the cell membrane. The protein is Probable endopeptidase YafL (yafL) of Escherichia coli (strain K12).